A 315-amino-acid chain; its full sequence is Ribosomal RNA small subunit methyltransferase H (315 aa).

Residues 61 to 63 (GGH), Asp-80, Phe-108, Asp-124, and Gln-131 contribute to the S-adenosyl-L-methionine site. Positions 291 to 315 (PQPEEEEKNPRSRSAKLRFAQRKPL) are disordered. The span at 301–315 (RSRSAKLRFAQRKPL) shows a compositional bias: basic residues.

This sequence belongs to the methyltransferase superfamily. RsmH family.

The protein localises to the cytoplasm. It carries out the reaction cytidine(1402) in 16S rRNA + S-adenosyl-L-methionine = N(4)-methylcytidine(1402) in 16S rRNA + S-adenosyl-L-homocysteine + H(+). Specifically methylates the N4 position of cytidine in position 1402 (C1402) of 16S rRNA. The chain is Ribosomal RNA small subunit methyltransferase H from Crocosphaera subtropica (strain ATCC 51142 / BH68) (Cyanothece sp. (strain ATCC 51142)).